Consider the following 425-residue polypeptide: Glucose-1-phosphate adenylyltransferase (425 aa).

Residues Tyr-109, Gly-175, 190–191, and Ser-208 each bind alpha-D-glucose 1-phosphate; that span reads EK.

This sequence belongs to the bacterial/plant glucose-1-phosphate adenylyltransferase family. In terms of assembly, homotetramer.

It carries out the reaction alpha-D-glucose 1-phosphate + ATP + H(+) = ADP-alpha-D-glucose + diphosphate. Its pathway is glycan biosynthesis; glycogen biosynthesis. In terms of biological role, involved in the biosynthesis of ADP-glucose, a building block required for the elongation reactions to produce glycogen. Catalyzes the reaction between ATP and alpha-D-glucose 1-phosphate (G1P) to produce pyrophosphate and ADP-Glc. This is Glucose-1-phosphate adenylyltransferase from Saccharophagus degradans (strain 2-40 / ATCC 43961 / DSM 17024).